A 157-amino-acid chain; its full sequence is Crossover junction endodeoxyribonuclease RuvC (157 aa).

Residues D7, E67, and D140 contribute to the active site. 3 residues coordinate Mg(2+): D7, E67, and D140.

This sequence belongs to the RuvC family. As to quaternary structure, homodimer which binds Holliday junction (HJ) DNA. The HJ becomes 2-fold symmetrical on binding to RuvC with unstacked arms; it has a different conformation from HJ DNA in complex with RuvA. In the full resolvosome a probable DNA-RuvA(4)-RuvB(12)-RuvC(2) complex forms which resolves the HJ. Mg(2+) serves as cofactor.

Its subcellular location is the cytoplasm. It carries out the reaction Endonucleolytic cleavage at a junction such as a reciprocal single-stranded crossover between two homologous DNA duplexes (Holliday junction).. Its function is as follows. The RuvA-RuvB-RuvC complex processes Holliday junction (HJ) DNA during genetic recombination and DNA repair. Endonuclease that resolves HJ intermediates. Cleaves cruciform DNA by making single-stranded nicks across the HJ at symmetrical positions within the homologous arms, yielding a 5'-phosphate and a 3'-hydroxyl group; requires a central core of homology in the junction. The consensus cleavage sequence is 5'-(A/T)TT(C/G)-3'. Cleavage occurs on the 3'-side of the TT dinucleotide at the point of strand exchange. HJ branch migration catalyzed by RuvA-RuvB allows RuvC to scan DNA until it finds its consensus sequence, where it cleaves and resolves the cruciform DNA. This chain is Crossover junction endodeoxyribonuclease RuvC, found in Rickettsia akari (strain Hartford).